Reading from the N-terminus, the 467-residue chain is Variant surface glycoprotein 7 (467 aa).

The span at 77–87 (TIAAGATNTKL) shows a compositional bias: polar residues. The tract at residues 77–133 (TIAAGATNTKLSGHHPNQGRRGRRRSSSARPNNSKGNSPSKRAGGAVRGETPASGRL) is disordered. Over residues 93-103 (NQGRRGRRRSS) the composition is skewed to basic residues. Positions 107–116 (PNNSKGNSPS) are enriched in polar residues. N-linked (GlcNAc...) asparagine glycosylation is found at N108 and N252. The tract at residues 382-407 (AEKVENPRSQGNPETAENKKEGGNTA) is disordered. Residue N416 is glycosylated (N-linked (GlcNAc...) asparagine). A lipid anchor (GPI-anchor amidated aspartate) is attached at D444. Positions 445–467 (SSFLLSKQFALSVVSAAFAALLF) are cleaved as a propeptide — removed in mature form.

Its subcellular location is the cell membrane. Functionally, VSG forms a coat on the surface of the parasite. The trypanosome evades the immune response of the host by expressing a series of antigenically distinct VSGs from an estimated 1000 VSG genes. This Trypanosoma brucei rhodesiense protein is Variant surface glycoprotein 7.